The primary structure comprises 351 residues: Sulfate/thiosulfate import ATP-binding protein CysA (351 aa).

The region spanning 5–235 (IVVADATKRY…PANAFVMSFL (231 aa)) is the ABC transporter domain. 37 to 44 (GPSGSGKS) contributes to the ATP binding site.

It belongs to the ABC transporter superfamily. Sulfate/tungstate importer (TC 3.A.1.6) family. In terms of assembly, the complex is composed of two ATP-binding proteins (CysA), two transmembrane proteins (CysT and CysW) and a solute-binding protein (CysP).

The protein resides in the cell membrane. It catalyses the reaction sulfate(out) + ATP + H2O = sulfate(in) + ADP + phosphate + H(+). It carries out the reaction thiosulfate(out) + ATP + H2O = thiosulfate(in) + ADP + phosphate + H(+). Part of the ABC transporter complex CysAWTP involved in sulfate/thiosulfate import. Responsible for energy coupling to the transport system. This chain is Sulfate/thiosulfate import ATP-binding protein CysA, found in Mycobacterium bovis (strain ATCC BAA-935 / AF2122/97).